A 213-amino-acid polypeptide reads, in one-letter code: Uridine kinase (213 aa).

Gly14–Ser21 is an ATP binding site.

Belongs to the uridine kinase family.

The protein localises to the cytoplasm. It catalyses the reaction uridine + ATP = UMP + ADP + H(+). It carries out the reaction cytidine + ATP = CMP + ADP + H(+). It participates in pyrimidine metabolism; CTP biosynthesis via salvage pathway; CTP from cytidine: step 1/3. The protein operates within pyrimidine metabolism; UMP biosynthesis via salvage pathway; UMP from uridine: step 1/1. The protein is Uridine kinase of Vibrio vulnificus (strain CMCP6).